The following is a 472-amino-acid chain: Eukaryotic translation initiation factor 2 subunit 3 (472 aa).

Ala2 is modified (N-acetylalanine; partial). The residue at position 16 (Ser16) is a Phosphoserine. The tr-type G domain maps to 39 to 248 (QATINIGTIG…IVKKIPVPPR (210 aa)). The interval 48 to 55 (GHVAHGKS) is G1. 51–56 (AHGKST) lines the GTP pocket. The segment at 76 to 80 (NITIK) is G2. The G3 stretch occupies residues 134–137 (DCPG). GTP-binding positions include 190–193 (NKID) and 225–227 (SAQ). The G4 stretch occupies residues 190 to 193 (NKID). The segment at 225-227 (SAQ) is G5. Residues 457-469 (GQIRRGVTIKPTV) are interacts with CDC123.

It belongs to the TRAFAC class translation factor GTPase superfamily. Classic translation factor GTPase family. EIF2G subfamily. As to quaternary structure, eukaryotic translation initiation factor 2 eIF2 is a heterotrimeric complex composed of an alpha (EIF2S1), a beta (EIF2S2) and a gamma (EIF2S3) chain. eIF2 is member of the 43S pre-initiation complex (43S PIC). Interacts (via C-terminus) with CDC123; the interaction is direct. Expressed in testis, brain, liver and muscle.

It is found in the cytoplasm. The protein localises to the cytosol. The catalysed reaction is GTP + H2O = GDP + phosphate + H(+). In terms of biological role, member of the eIF2 complex that functions in the early steps of protein synthesis by forming a ternary complex with GTP and initiator tRNA. This complex binds to a 40S ribosomal subunit, followed by mRNA binding to form the 43S pre-initiation complex (43S PIC). Junction of the 60S ribosomal subunit to form the 80S initiation complex is preceded by hydrolysis of the GTP bound to eIF2 and release of an eIF2-GDP binary complex. In order for eIF2 to recycle and catalyze another round of initiation, the GDP bound to eIF2 must exchange with GTP by way of a reaction catalyzed by eIF-2B. The chain is Eukaryotic translation initiation factor 2 subunit 3 (EIF2S3) from Homo sapiens (Human).